Consider the following 825-residue polypeptide: Breast cancer anti-estrogen resistance protein 3 homolog (825 aa).

At Ala-2 the chain carries N-acetylalanine. Phosphoserine occurs at positions 32, 78, 83, 182, and 290. The segment at 40–84 (EAYPDVSIHGTLPRKKKGPPPIRSCDSASHMGTLPHSKSPRQSSP) is disordered. The SH2 domain occupies 154 to 253 (WYHGRIPRQV…QSGAIIFQPI (100 aa)). Residues 300–320 (DHSLPRGNLLRNKDKSGSQPA) form a disordered region. Lys-334 carries the post-translational modification N6-methyllysine. Phosphoserine occurs at positions 358, 363, and 375. Omega-N-methylarginine is present on Arg-442. Ser-471 carries the post-translational modification Phosphoserine. The 271-residue stretch at 548–818 (DARVIAQHML…TALSRKLEPP (271 aa)) folds into the Ras-GEF domain. The tract at residues 744–748 (LATAR) is mediates the interaction with BCAR1/p130CAS.

As to quaternary structure, part of a complex comprised of PTPRA, BCAR1, BCAR3 and SRC; the formation of the complex is dependent on integrin mediated-tyrosine phosphorylation of PTPRA. Within the complex, interacts (via SH2 domain) with PTPRA (when phosphorylated on 'Tyr-792'). Interacts (via Ras-GEF domain) with BCAR1. Interacts (via Ras-GEF domain) with NEDD9. Interacts with PTK2/FAK1. Interacts with PTPN1. Interacts (via SH2 domain) with EGFR (when tyrosine-phosphorylated). Post-translationally, phosphorylated on tyrosine residues.

Its subcellular location is the cytoplasm. The protein resides in the cell junction. It localises to the focal adhesion. Acts as an adapter protein downstream of several growth factor receptors to promote cell proliferation, migration, and redistribution of actin fibers. Specifically involved in INS/insulin signaling pathway by mediating MAPK1/ERK2-MAPK3/ERK1 activation and DNA synthesis. Promotes insulin-mediated membrane ruffling. In response to vasoconstrictor peptide EDN1, involved in the activation of RAP1 downstream of PTK2B via interaction with phosphorylated BCAR1. Inhibits cell migration and invasion via regulation of TGFB-mediated matrix digestion, actin filament rearrangement, and inhibition of invadopodia activity. May inhibit TGFB/SMAD signaling, via facilitating BCAR1 and SMAD2 and/or SMAD3 interaction. Regulates EGF-induced DNA synthesis. Required for the maintenance of ocular lens morphology and structural integrity, potentially via regulation of focal adhesion complex signaling. Acts upstream of PTPRA to regulate the localization of BCAR1 and PTPRA to focal adhesions, via regulation of SRC-mediated phosphorylation of PTPRA. Positively regulates integrin-induced tyrosine phosphorylation of BCAR1. Acts as a guanine nucleotide exchange factor (GEF) for small GTPases RALA, RAP1A and RRAS. However, in a contrasting study, lacks GEF activity towards RAP1. The chain is Breast cancer anti-estrogen resistance protein 3 homolog from Rattus norvegicus (Rat).